The chain runs to 230 residues: Cytochrome c-552 (230 aa).

The N-terminal stretch at 1–47 (MTTYLSQDRLRNKENDTMTYQHSKMYQSRTFLLFSALLLVAGQASAA) is a signal peptide. Heme c is bound by residues cysteine 63, cysteine 66, histidine 67, cysteine 166, cysteine 169, and histidine 170.

Post-translationally, binds 2 heme c groups covalently per subunit.

It localises to the periplasm. Its function is as follows. Diheme, high potential cytochrome c. The sequence is that of Cytochrome c-552 (cyc1) from Acidithiobacillus ferridurans.